A 474-amino-acid polypeptide reads, in one-letter code: Methylenetetrahydrofolate--tRNA-(uracil-5-)-methyltransferase TrmFO (474 aa).

Position 9–14 (9–14) interacts with FAD; that stretch reads GGGLAG. Residues 425-451 form a disordered region; that stretch reads PPLERMPRNETGKRLRGPEKAALKKRA. Positions 429–451 are enriched in basic and acidic residues; that stretch reads RMPRNETGKRLRGPEKAALKKRA.

This sequence belongs to the MnmG family. TrmFO subfamily. The cofactor is FAD.

The protein localises to the cytoplasm. The enzyme catalyses uridine(54) in tRNA + (6R)-5,10-methylene-5,6,7,8-tetrahydrofolate + NADH + H(+) = 5-methyluridine(54) in tRNA + (6S)-5,6,7,8-tetrahydrofolate + NAD(+). The catalysed reaction is uridine(54) in tRNA + (6R)-5,10-methylene-5,6,7,8-tetrahydrofolate + NADPH + H(+) = 5-methyluridine(54) in tRNA + (6S)-5,6,7,8-tetrahydrofolate + NADP(+). Its function is as follows. Catalyzes the folate-dependent formation of 5-methyl-uridine at position 54 (M-5-U54) in all tRNAs. The sequence is that of Methylenetetrahydrofolate--tRNA-(uracil-5-)-methyltransferase TrmFO from Methylorubrum populi (strain ATCC BAA-705 / NCIMB 13946 / BJ001) (Methylobacterium populi).